The primary structure comprises 709 residues: Polyribonucleotide nucleotidyltransferase (709 aa).

Residues Asp-485 and Asp-491 each contribute to the Mg(2+) site. A KH domain is found at 552-611 (PRIHTMKIDPKKIKDVIGKGGATIRALTEETGTSIDIDDDGTVKIAATDNNAAKRVMERI). Residues 621 to 689 (NAIYKGKVTR…RQGRIRLTMK (69 aa)) enclose the S1 motif domain.

It belongs to the polyribonucleotide nucleotidyltransferase family. As to quaternary structure, component of the RNA degradosome, which is a multiprotein complex involved in RNA processing and mRNA degradation. It depends on Mg(2+) as a cofactor.

The protein resides in the cytoplasm. The catalysed reaction is RNA(n+1) + phosphate = RNA(n) + a ribonucleoside 5'-diphosphate. Functionally, involved in mRNA degradation. Catalyzes the phosphorolysis of single-stranded polyribonucleotides processively in the 3'- to 5'-direction. This chain is Polyribonucleotide nucleotidyltransferase, found in Glaesserella parasuis serovar 5 (strain SH0165) (Haemophilus parasuis).